The following is a 528-amino-acid chain: Exodeoxyribonuclease 7 large subunit (528 aa).

The tract at residues 486 to 528 (QGDRDAVIDGESSGVLPPSAAPAPTRPTPRPKPASSSDQGSLF) is disordered. The span at 504-517 (SAAPAPTRPTPRPK) shows a compositional bias: pro residues.

This sequence belongs to the XseA family. In terms of assembly, heterooligomer composed of large and small subunits.

It is found in the cytoplasm. The enzyme catalyses Exonucleolytic cleavage in either 5'- to 3'- or 3'- to 5'-direction to yield nucleoside 5'-phosphates.. Bidirectionally degrades single-stranded DNA into large acid-insoluble oligonucleotides, which are then degraded further into small acid-soluble oligonucleotides. The chain is Exodeoxyribonuclease 7 large subunit from Caulobacter sp. (strain K31).